A 226-amino-acid chain; its full sequence is Ribonuclease 3 (226 aa).

One can recognise an RNase III domain in the interval 6–128 (TNRLQKKLGY…LIGGVFLDSD (123 aa)). Residue Glu-41 participates in Mg(2+) binding. Asp-45 is a catalytic residue. Mg(2+) contacts are provided by Asp-114 and Glu-117. The active site involves Glu-117. The DRBM domain maps to 155–225 (DPKTRLQEYL…AEQALKLLEL (71 aa)).

The protein belongs to the ribonuclease III family. As to quaternary structure, homodimer. It depends on Mg(2+) as a cofactor.

It localises to the cytoplasm. The enzyme catalyses Endonucleolytic cleavage to 5'-phosphomonoester.. Its function is as follows. Digests double-stranded RNA. Involved in the processing of primary rRNA transcript to yield the immediate precursors to the large and small rRNAs (23S and 16S). Processes some mRNAs, and tRNAs when they are encoded in the rRNA operon. Processes pre-crRNA and tracrRNA of type II CRISPR loci if present in the organism. This Sodalis glossinidius (strain morsitans) protein is Ribonuclease 3.